Reading from the N-terminus, the 863-residue chain is Leucine--tRNA ligase (863 aa).

Positions 42-52 (PYPSGRLHMGH) match the 'HIGH' region motif. Residues 622-626 (KMSKS) carry the 'KMSKS' region motif. Position 625 (K625) interacts with ATP.

This sequence belongs to the class-I aminoacyl-tRNA synthetase family.

The protein resides in the cytoplasm. The catalysed reaction is tRNA(Leu) + L-leucine + ATP = L-leucyl-tRNA(Leu) + AMP + diphosphate. This chain is Leucine--tRNA ligase, found in Shewanella sediminis (strain HAW-EB3).